Here is a 106-residue protein sequence, read N- to C-terminus: Large ribosomal subunit protein eL42 (106 aa).

Residues 34 to 53 (YAQGRRRYDRKRSGYGGQTK) form a disordered region. At Lys-53 the chain carries N6-methyllysine.

It belongs to the eukaryotic ribosomal protein eL42 family.

Its subcellular location is the cytoplasm. In Pongo abelii (Sumatran orangutan), this protein is Large ribosomal subunit protein eL42 (RPL36AL).